Consider the following 399-residue polypeptide: Elongation factor Tu (399 aa).

The tr-type G domain maps to 10–209 (KPHVNIGTIG…EVDAYIPTPK (200 aa)). Residues 19 to 26 (GHVDHGKT) form a G1 region. 19–26 (GHVDHGKT) lines the GTP pocket. Threonine 26 is a Mg(2+) binding site. The segment at 60-64 (GITIA) is G2. Residues 81–84 (DCPG) are G3. Residues 81–85 (DCPGH) and 136–139 (NKQD) contribute to the GTP site. The segment at 136–139 (NKQD) is G4. The G5 stretch occupies residues 174 to 176 (SAL).

It belongs to the TRAFAC class translation factor GTPase superfamily. Classic translation factor GTPase family. EF-Tu/EF-1A subfamily. As to quaternary structure, monomer.

The protein resides in the cytoplasm. The catalysed reaction is GTP + H2O = GDP + phosphate + H(+). In terms of biological role, GTP hydrolase that promotes the GTP-dependent binding of aminoacyl-tRNA to the A-site of ribosomes during protein biosynthesis. The polypeptide is Elongation factor Tu (Helicobacter pylori (strain P12)).